The following is a 297-amino-acid chain: Acetaldehyde dehydrogenase (297 aa).

Residue T18–I21 coordinates NAD(+). Catalysis depends on C133, which acts as the Acyl-thioester intermediate. NAD(+) is bound by residues S165–N173 and N275.

It belongs to the acetaldehyde dehydrogenase family.

It carries out the reaction acetaldehyde + NAD(+) + CoA = acetyl-CoA + NADH + H(+). This chain is Acetaldehyde dehydrogenase, found in Spirochaeta aurantia.